Here is a 341-residue protein sequence, read N- to C-terminus: Heat-inducible transcription repressor HrcA (341 aa).

The protein belongs to the HrcA family.

Negative regulator of class I heat shock genes (grpE-dnaK-dnaJ and groELS operons). Prevents heat-shock induction of these operons. The chain is Heat-inducible transcription repressor HrcA from Carboxydothermus hydrogenoformans (strain ATCC BAA-161 / DSM 6008 / Z-2901).